A 361-amino-acid polypeptide reads, in one-letter code: Phosphoserine aminotransferase (361 aa).

Arg43 is a binding site for L-glutamate. Pyridoxal 5'-phosphate contacts are provided by residues 77–78 (AS), Trp103, Thr153, Asp173, and Gln196. Residue Lys197 is modified to N6-(pyridoxal phosphate)lysine. Pyridoxal 5'-phosphate is bound at residue 238 to 239 (NT).

This sequence belongs to the class-V pyridoxal-phosphate-dependent aminotransferase family. SerC subfamily. Homodimer. Requires pyridoxal 5'-phosphate as cofactor.

Its subcellular location is the cytoplasm. It catalyses the reaction O-phospho-L-serine + 2-oxoglutarate = 3-phosphooxypyruvate + L-glutamate. The enzyme catalyses 4-(phosphooxy)-L-threonine + 2-oxoglutarate = (R)-3-hydroxy-2-oxo-4-phosphooxybutanoate + L-glutamate. Its pathway is amino-acid biosynthesis; L-serine biosynthesis; L-serine from 3-phospho-D-glycerate: step 2/3. It functions in the pathway cofactor biosynthesis; pyridoxine 5'-phosphate biosynthesis; pyridoxine 5'-phosphate from D-erythrose 4-phosphate: step 3/5. Functionally, catalyzes the reversible conversion of 3-phosphohydroxypyruvate to phosphoserine and of 3-hydroxy-2-oxo-4-phosphonooxybutanoate to phosphohydroxythreonine. The sequence is that of Phosphoserine aminotransferase from Pseudomonas aeruginosa (strain ATCC 15692 / DSM 22644 / CIP 104116 / JCM 14847 / LMG 12228 / 1C / PRS 101 / PAO1).